We begin with the raw amino-acid sequence, 217 residues long: Octanoyltransferase (217 aa).

Positions 35–214 (DEAGERIWLL…TLPAFLDKLR (180 aa)) constitute a BPL/LPL catalytic domain. Substrate contacts are provided by residues 73–80 (RGGRYTYH), 145–147 (AIG), and 158–160 (GFS). Cys-176 functions as the Acyl-thioester intermediate in the catalytic mechanism.

It belongs to the LipB family.

Its subcellular location is the cytoplasm. The catalysed reaction is octanoyl-[ACP] + L-lysyl-[protein] = N(6)-octanoyl-L-lysyl-[protein] + holo-[ACP] + H(+). The protein operates within protein modification; protein lipoylation via endogenous pathway; protein N(6)-(lipoyl)lysine from octanoyl-[acyl-carrier-protein]: step 1/2. In terms of biological role, catalyzes the transfer of endogenously produced octanoic acid from octanoyl-acyl-carrier-protein onto the lipoyl domains of lipoate-dependent enzymes. Lipoyl-ACP can also act as a substrate although octanoyl-ACP is likely to be the physiological substrate. This chain is Octanoyltransferase, found in Sphingopyxis alaskensis (strain DSM 13593 / LMG 18877 / RB2256) (Sphingomonas alaskensis).